The chain runs to 103 residues: MYAIIETGGKQYKVQEGDVLKVEKLKADVDSVVKIDKVLAISSDDGFVVGKPYVDGAYVEAKVLEHAKDKKIIVFTYKSKTGYHRKLGHRQWYTKIQITKIAK.

This sequence belongs to the bacterial ribosomal protein bL21 family. Part of the 50S ribosomal subunit. Contacts protein L20.

In terms of biological role, this protein binds to 23S rRNA in the presence of protein L20. The protein is Large ribosomal subunit protein bL21 of Caldicellulosiruptor saccharolyticus (strain ATCC 43494 / DSM 8903 / Tp8T 6331).